The chain runs to 332 residues: Trace amine-associated receptor 1 (332 aa).

Over 1–23 (MHLCHAITNISHRNSDWSREVQA) the chain is Extracellular. Residue N9 is glycosylated (N-linked (GlcNAc...) asparagine). The chain crosses the membrane as a helical span at residues 24–48 (SLYSLMSLIILATLVGNLIVIISIS). The Cytoplasmic portion of the chain corresponds to 49–58 (HFKQLHTPTN). The chain crosses the membrane as a helical span at residues 59–80 (WLLHSMAIVDFLLGCLIMPCSM). Residues 81-95 (VRTVERCWYFGEILC) lie on the Extracellular side of the membrane. A disulfide bridge links C95 with C181. The chain crosses the membrane as a helical span at residues 96 to 118 (KVHTSTDIMLSSASIFHLAFISI). Residue D102 participates in 2-phenylethylamine binding. Residues 119–138 (DRYCAVCDPLRYKAKINIST) lie on the Cytoplasmic side of the membrane. The helical transmembrane segment at 139 to 160 (ILVMILVSWSLPAVYAFGMIFL) threads the bilayer. The Extracellular portion of the chain corresponds to 161–187 (ELNLKGVEELYRSQVSDLGGCSPFFSK). An extracellular Loop 2 (ECL2) region spans residues 174-185 (QVSDLGGCSPFF). Residues 188–210 (VSGVLAFMTSFYIPGSVMLFVYY) form a helical membrane-spanning segment. Residues 211–246 (RIYFIAKGQARSINRTNVQVGLEGKSQAPQSKETKA) lie on the Cytoplasmic side of the membrane. A helical transmembrane segment spans residues 247-270 (AKTLGIMVGVFLVCWCPFFLCTVL). At 271 to 283 (DPFLGYVIPPSLN) the chain is on the extracellular side. Residues 284-304 (DALYWFGYLNSALNPMVYAFF) form a helical membrane-spanning segment. The Cytoplasmic segment spans residues 305-332 (YPWFRRALKMVLLGKIFQKDSSRSKLFL).

It belongs to the G-protein coupled receptor 1 family. As to expression, widely distributed throughout the brain. Strongly expressed in the mitral cell layer of the olfactory bulb, piriform cortex, the arcuate, motor, and mesencephalic trigeminal nuclei, lateral reticular and hypoglossal nuclei, cerebellar Purkinje cells, and ventral horn of the spinal cord. Moderately expressed in the frontal, entorhinal, and agranular cortices, the ventral pallidum, thalamus, hippocampus, several hypothalamic nuclei, ambiguus, dorsal raphe, and gigantocellular reticular nuclei. Weakly expressed in the septum, basal ganglia, amygdala, myelencephalon, and spinal cord dorsal horn. Particularly interesting is the moderate expression in several monoaminergic cell groups, namely the dorsal raphe, the locus coeruleus, and the ventral tegmental area.

Its subcellular location is the endomembrane system. The protein localises to the endoplasmic reticulum membrane. It localises to the cell membrane. With respect to regulation, activated by SEP-363856 small molecule: IHCH-7179 acts both as an agonist activator for HTR1A and TAAR1. Intracellular G-protein coupled receptor for trace amines, which recognizes endogenous amine-containing metabolites such as beta-phenylethylamine (beta-PEA), 3-iodothyronamine (T1AM), isoamylamine (IAA), cadaverine (CAD), cyclohexylamine (CHA), p-tyramine (p-TYR), trimethylamine (TMA), octopamine and tryptamine. Also functions as a receptor for various drugs and psychoactive substances, such as amphetamine and methamphetamine. Unresponsive to classical biogenic amines, such as epinephrine and histamine and only partially activated by dopamine and serotonin. Expressed in both the central and peripheral nervous system: TAAR1 activation regulates the activity of several neurotransmitter signaling pathways by (1) decreasing the basal firing rates of the neurons involved and by (2) lowering the sensitivity of receptors to neurotransmitters. Ligand binding causes a conformation change that triggers signaling via guanine nucleotide-binding proteins (G proteins) and modulates the activity of downstream effectors. TAAR1 is coupled with different G(i)/G(o)-, G(s)- or G(q)/G(11) classes of G alpha proteins depending on the ligand. CAD-binding is coupled to G(i)/G(o) G alpha proteins and mediates inhibition of adenylate cyclase activity. T1AM- or beta-PEA-binding is coupled to G(s) G alpha proteins and mediates activation of adenylate cyclase activity. CHA- or IAA-binding is coupled to G(q)/G(11) G alpha proteins and activates phospholipase C-beta, releasing diacylglycerol (DAG) and inositol 1,4,5-trisphosphate (IP3) second messengers. TMA-binding is coupled with all three G(i)/G(o)-, G(s)- or G(q)/G(11) G alpha protein subtypes. This is Trace amine-associated receptor 1 from Mus musculus (Mouse).